The following is a 559-amino-acid chain: 2,3-bisphosphoglycerate-independent phosphoglycerate mutase (559 aa).

D28 and S81 together coordinate Mn(2+). Residue S81 is the Phosphoserine intermediate of the active site. Substrate is bound by residues H140, 170–171 (RD), R206, R213, 286–289 (RADR), and K361. D430, H434, D471, H472, and H501 together coordinate Mn(2+).

This sequence belongs to the BPG-independent phosphoglycerate mutase family. As to quaternary structure, monomer. Mn(2+) is required as a cofactor.

The protein localises to the cytoplasm. It catalyses the reaction (2R)-2-phosphoglycerate = (2R)-3-phosphoglycerate. It participates in carbohydrate degradation; glycolysis; pyruvate from D-glyceraldehyde 3-phosphate: step 3/5. Its function is as follows. Catalyzes the interconversion of 2-phosphoglycerate and 3-phosphoglycerate. The protein is 2,3-bisphosphoglycerate-independent phosphoglycerate mutase (PGM1) of Mesembryanthemum crystallinum (Common ice plant).